Here is a 365-residue protein sequence, read N- to C-terminus: Cobalt-precorrin-5B C(1)-methyltransferase (365 aa).

The protein belongs to the CbiD family.

It carries out the reaction Co-precorrin-5B + S-adenosyl-L-methionine = Co-precorrin-6A + S-adenosyl-L-homocysteine. It functions in the pathway cofactor biosynthesis; adenosylcobalamin biosynthesis; cob(II)yrinate a,c-diamide from sirohydrochlorin (anaerobic route): step 6/10. Catalyzes the methylation of C-1 in cobalt-precorrin-5B to form cobalt-precorrin-6A. This Methanococcus maripaludis (strain DSM 14266 / JCM 13030 / NBRC 101832 / S2 / LL) protein is Cobalt-precorrin-5B C(1)-methyltransferase.